Consider the following 202-residue polypeptide: MQAFIRAHGIILPMNQDHVDTDAIIPQRWLVTVERDGLADGFMGAWRYDEHGQPRPECVLNQPAYQGAAIVLARENYGCGSSREHAVWAHQGYGIRAIVAASYGPIFHENCLKNGLLPVTLPAADVATLMAQALADPGCACEVDLVSQRVIGPDGRAYPFEIDAGRRQLLLEGVDDIDLALARAADIAAFQRRQQQDQPWLA.

This sequence belongs to the LeuD family. LeuD type 1 subfamily. As to quaternary structure, heterodimer of LeuC and LeuD.

The catalysed reaction is (2R,3S)-3-isopropylmalate = (2S)-2-isopropylmalate. It participates in amino-acid biosynthesis; L-leucine biosynthesis; L-leucine from 3-methyl-2-oxobutanoate: step 2/4. In terms of biological role, catalyzes the isomerization between 2-isopropylmalate and 3-isopropylmalate, via the formation of 2-isopropylmaleate. This Bordetella pertussis (strain Tohama I / ATCC BAA-589 / NCTC 13251) protein is 3-isopropylmalate dehydratase small subunit 1.